A 215-amino-acid chain; its full sequence is Probable transaldolase (215 aa).

Residue K83 is the Schiff-base intermediate with substrate of the active site.

Belongs to the transaldolase family. Type 3B subfamily.

It is found in the cytoplasm. It catalyses the reaction D-sedoheptulose 7-phosphate + D-glyceraldehyde 3-phosphate = D-erythrose 4-phosphate + beta-D-fructose 6-phosphate. It functions in the pathway carbohydrate degradation; pentose phosphate pathway; D-glyceraldehyde 3-phosphate and beta-D-fructose 6-phosphate from D-ribose 5-phosphate and D-xylulose 5-phosphate (non-oxidative stage): step 2/3. In terms of biological role, transaldolase is important for the balance of metabolites in the pentose-phosphate pathway. This chain is Probable transaldolase, found in Methanococcus maripaludis (strain DSM 14266 / JCM 13030 / NBRC 101832 / S2 / LL).